Consider the following 838-residue polypeptide: Leucine--tRNA ligase (838 aa).

Positions 36–46 match the 'HIGH' region motif; sequence PYPSGKIHMGH. The 'KMSKS' region motif lies at 611 to 615; sequence KMSKS. Lys614 serves as a coordination point for ATP.

This sequence belongs to the class-I aminoacyl-tRNA synthetase family.

It is found in the cytoplasm. It carries out the reaction tRNA(Leu) + L-leucine + ATP = L-leucyl-tRNA(Leu) + AMP + diphosphate. This is Leucine--tRNA ligase from Wolbachia sp. subsp. Drosophila simulans (strain wRi).